The following is a 292-amino-acid chain: MEGFLNLDKPAGLTSHDCIARLRRVLGERRIGHGGTLDPAATGVLPVAVGRATRLLRFLSEGKVYRATVRFGLSTDTDDLEGNILADAGAADLDLGRVQVHLQAFRGTISQVPPRYSAIHQEGERLYDLARRGVAIAEIAPRTVEIQALTVLDWYPGHYPELQIEIACSTGTYIRSIARDLGTALGTGATLARLLRTRSGPFALEASLPLAAVEAGFQAGTVPLIGPRTALAHLAAVHLEPPLAARWLMGQRVPGDCEGAFAQIWECETDRFLGVAACEAGSLQPLVVLPTL.

Asp38 functions as the Nucleophile in the catalytic mechanism.

Belongs to the pseudouridine synthase TruB family. Type 1 subfamily.

The catalysed reaction is uridine(55) in tRNA = pseudouridine(55) in tRNA. Its function is as follows. Responsible for synthesis of pseudouridine from uracil-55 in the psi GC loop of transfer RNAs. The sequence is that of tRNA pseudouridine synthase B from Gloeobacter violaceus (strain ATCC 29082 / PCC 7421).